A 443-amino-acid polypeptide reads, in one-letter code: Phosphoglucosamine mutase (443 aa).

Serine 101 functions as the Phosphoserine intermediate in the catalytic mechanism. Mg(2+) is bound by residues serine 101, aspartate 239, aspartate 241, and aspartate 243. A Phosphoserine modification is found at serine 101.

The protein belongs to the phosphohexose mutase family. Mg(2+) is required as a cofactor. Post-translationally, activated by phosphorylation.

The catalysed reaction is alpha-D-glucosamine 1-phosphate = D-glucosamine 6-phosphate. Functionally, catalyzes the conversion of glucosamine-6-phosphate to glucosamine-1-phosphate. The chain is Phosphoglucosamine mutase from Francisella tularensis subsp. tularensis (strain FSC 198).